The sequence spans 95 residues: Large ribosomal subunit protein bL25 (95 aa).

The protein belongs to the bacterial ribosomal protein bL25 family. As to quaternary structure, part of the 50S ribosomal subunit; part of the 5S rRNA/L5/L18/L25 subcomplex. Contacts the 5S rRNA. Binds to the 5S rRNA independently of L5 and L18.

This is one of the proteins that binds to the 5S RNA in the ribosome where it forms part of the central protuberance. The chain is Large ribosomal subunit protein bL25 from Chromobacterium violaceum (strain ATCC 12472 / DSM 30191 / JCM 1249 / CCUG 213 / NBRC 12614 / NCIMB 9131 / NCTC 9757 / MK).